We begin with the raw amino-acid sequence, 94 residues long: Co-chaperonin GroES (94 aa).

The protein belongs to the GroES chaperonin family. In terms of assembly, heptamer of 7 subunits arranged in a ring. Interacts with the chaperonin GroEL.

The protein resides in the cytoplasm. Together with the chaperonin GroEL, plays an essential role in assisting protein folding. The GroEL-GroES system forms a nano-cage that allows encapsulation of the non-native substrate proteins and provides a physical environment optimized to promote and accelerate protein folding. GroES binds to the apical surface of the GroEL ring, thereby capping the opening of the GroEL channel. The protein is Co-chaperonin GroES of Lactococcus lactis subsp. lactis (strain IL1403) (Streptococcus lactis).